Reading from the N-terminus, the 758-residue chain is MTILNHTLGFPRVGLKRELKKAQESYWAGNSTQEELLNVGRELRARHWQQQQQAGVDLVPVGDFAWYDHVLTTSLLLGNVPERHQNADGSIDIDTLFRIGRGRAPTGKPAAAAEMTKWFNTNYHYMVPEFQQGQQFKLGWTQLLDEVDEALALGHKIKPVLLGPITYLWLGKVKGEQFDRLSLLNDILPVYQQVLAELAKRGIEWVQIDEPALVLELPQEWLDAYQPAYQALQGQVKLLLTTYFDSIGHNIDTIRALPVQGLHVDVVAGHDDLAVLNKNLPKEWLLSLGVINGRNVWRADLSSWFERLQPLVNSRPLWLGSSCSLLHSPIDLNEETRLDAEVKSWFAFALQKCAELALLTQALNAPNDAKLAELAAYSAPIRARRSSSRVHNAQVEQRLAAITSQDIERQLPYEARAETQRKRFNLPAWPTTTIGSFPQTTEIRGLRLDFKQGRLDGKNYRTGISEHIKQAIAEQERLGLDVLVHGEAERNDMVEYFGEHLDGFVFTQNGWVQSYGSRCVKPPVIIGDISRPEAITVEWAKYAQSLTEKPVKGMLTGPVTILCWSFPREDVSRETIAKQIALALRDEVEDLEKAGIGIIQIDEPALREGLPLRRADWQAYLQWAVDAFKLNAAVAQNDTQIHTHMCYCEFNDIMDSIAALDADVITIETSRSDMELLESFEDFAYPNEIGPGVYDIHSPNVPSVEWIEALLRKAAQRIPAERLWVNPDCGLKTRGWPETRQALANMVLAAQRLREEQI.

5-methyltetrahydropteroyltri-L-glutamate contacts are provided by residues 17–20 (RELK) and Lys117. Residues 434–436 (IGS) and Glu487 contribute to the L-homocysteine site. Residues 434-436 (IGS) and Glu487 contribute to the L-methionine site. 5-methyltetrahydropteroyltri-L-glutamate contacts are provided by residues 518-519 (RC) and Trp564. Asp602 contacts L-homocysteine. An L-methionine-binding site is contributed by Asp602. Residue Glu608 participates in 5-methyltetrahydropteroyltri-L-glutamate binding. Residues His644, Cys646, and Glu668 each coordinate Zn(2+). The active-site Proton donor is His697. Cys729 lines the Zn(2+) pocket.

Belongs to the vitamin-B12 independent methionine synthase family. Zn(2+) serves as cofactor.

The catalysed reaction is 5-methyltetrahydropteroyltri-L-glutamate + L-homocysteine = tetrahydropteroyltri-L-glutamate + L-methionine. Its pathway is amino-acid biosynthesis; L-methionine biosynthesis via de novo pathway; L-methionine from L-homocysteine (MetE route): step 1/1. Functionally, catalyzes the transfer of a methyl group from 5-methyltetrahydrofolate to homocysteine resulting in methionine formation. The sequence is that of 5-methyltetrahydropteroyltriglutamate--homocysteine methyltransferase from Yersinia pseudotuberculosis serotype I (strain IP32953).